A 338-amino-acid chain; its full sequence is tRNA N6-adenosine threonylcarbamoyltransferase (338 aa).

Residues H111 and H115 each contribute to the Fe cation site. Substrate is bound by residues 134–138 (LVSGG), D167, G180, and N272. D300 contributes to the Fe cation binding site.

It belongs to the KAE1 / TsaD family. Requires Fe(2+) as cofactor.

The protein localises to the cytoplasm. The catalysed reaction is L-threonylcarbamoyladenylate + adenosine(37) in tRNA = N(6)-L-threonylcarbamoyladenosine(37) in tRNA + AMP + H(+). In terms of biological role, required for the formation of a threonylcarbamoyl group on adenosine at position 37 (t(6)A37) in tRNAs that read codons beginning with adenine. Is involved in the transfer of the threonylcarbamoyl moiety of threonylcarbamoyl-AMP (TC-AMP) to the N6 group of A37, together with TsaE and TsaB. TsaD likely plays a direct catalytic role in this reaction. This is tRNA N6-adenosine threonylcarbamoyltransferase from Vibrio parahaemolyticus serotype O3:K6 (strain RIMD 2210633).